The sequence spans 253 residues: Adapter protein MecA (253 aa).

The protein belongs to the MecA family. Homodimer.

Its function is as follows. Enables the recognition and targeting of unfolded and aggregated proteins to the ClpC protease or to other proteins involved in proteolysis. This Streptococcus pyogenes serotype M18 (strain MGAS8232) protein is Adapter protein MecA.